Here is a 203-residue protein sequence, read N- to C-terminus: Ras-like protein family member 10A (203 aa).

Residues 1–203 form a small GTPase-like region; the sequence is MGGSLRVAVL…ALHPARCSLM (203 aa). Residue 11-18 coordinates GTP; sequence GAPGVGKT. The Effector region signature appears at 33-42; the sequence is HRPTDSPCLY. GTP-binding positions include 59–62 and 129–132; these read DGDV and NKRD. Cysteine 200 carries the cysteine methyl ester modification. Cysteine 200 carries S-farnesyl cysteine lipidation. A propeptide spans 201–203 (removed in mature form); the sequence is SLM.

The protein belongs to the small GTPase superfamily. Ras family. In terms of processing, isoprenylation is essential for nucleolar localization, and the proliferation-inhibiting activity of RASL10A.

The protein resides in the cell membrane. It localises to the nucleus. Its subcellular location is the nucleolus. The enzyme catalyses GTP + H2O = GDP + phosphate + H(+). Functionally, potent inhibitor of cellular proliferation. The sequence is that of Ras-like protein family member 10A (Rasl10a) from Mus musculus (Mouse).